We begin with the raw amino-acid sequence, 163 residues long: Photosystem II extrinsic protein V (163 aa).

The N-terminal stretch at methionine 1–alanine 26 is a signal peptide. Heme c-binding residues include cysteine 63, cysteine 66, histidine 67, and histidine 118.

The protein belongs to the cytochrome c family. PsbV subfamily. PSII is composed of 1 copy each of membrane proteins PsbA, PsbB, PsbC, PsbD, PsbE, PsbF, PsbH, PsbI, PsbJ, PsbK, PsbL, PsbM, PsbT, PsbY, PsbZ, Psb30/Ycf12, at least 3 peripheral proteins of the oxygen-evolving complex and a large number of cofactors. It forms dimeric complexes. The extrinsic subunits in red algae are PsbO (OEC33), PsbQ', cytochrome c-550 and PsbU. Heme c is required as a cofactor.

Its subcellular location is the plastid. The protein resides in the chloroplast thylakoid membrane. In terms of biological role, one of the extrinsic, lumenal subunits of photosystem II (PSII). PSII is a light-driven water plastoquinone oxidoreductase, using light energy to abstract electrons from H(2)O, generating a proton gradient subsequently used for ATP formation. The extrinsic proteins stabilize the structure of photosystem II oxygen-evolving complex (OEC), the ion environment of oxygen evolution and protect the OEC against heat-induced inactivation. The chain is Photosystem II extrinsic protein V from Porphyra purpurea (Red seaweed).